Reading from the N-terminus, the 352-residue chain is Phosphatidylglycerol--prolipoprotein diacylglyceryl transferase (352 aa).

The next 4 helical transmembrane spans lie at 20–40, 55–75, 97–117, and 122–142; these read WYGL…TWLA, FITY…VLFY, EGGM…LLYA, and VNSL…VFFG. Arginine 143 lines the a 1,2-diacyl-sn-glycero-3-phospho-(1'-sn-glycerol) pocket. 3 helical membrane-spanning segments follow: residues 248–268, 275–295, and 314–334; these read SQLF…FFLW, GFIA…DEHF, and WLSL…TRAA.

It belongs to the Lgt family.

It localises to the cell inner membrane. The catalysed reaction is L-cysteinyl-[prolipoprotein] + a 1,2-diacyl-sn-glycero-3-phospho-(1'-sn-glycerol) = an S-1,2-diacyl-sn-glyceryl-L-cysteinyl-[prolipoprotein] + sn-glycerol 1-phosphate + H(+). Its pathway is protein modification; lipoprotein biosynthesis (diacylglyceryl transfer). In terms of biological role, catalyzes the transfer of the diacylglyceryl group from phosphatidylglycerol to the sulfhydryl group of the N-terminal cysteine of a prolipoprotein, the first step in the formation of mature lipoproteins. The polypeptide is Phosphatidylglycerol--prolipoprotein diacylglyceryl transferase (Bdellovibrio bacteriovorus (strain ATCC 15356 / DSM 50701 / NCIMB 9529 / HD100)).